Consider the following 549-residue polypeptide: Glucose-6-phosphate isomerase (549 aa).

The Proton donor role is filled by glutamate 355. Catalysis depends on residues histidine 387 and lysine 515.

Belongs to the GPI family.

The protein resides in the cytoplasm. The catalysed reaction is alpha-D-glucose 6-phosphate = beta-D-fructose 6-phosphate. It functions in the pathway carbohydrate biosynthesis; gluconeogenesis. Its pathway is carbohydrate degradation; glycolysis; D-glyceraldehyde 3-phosphate and glycerone phosphate from D-glucose: step 2/4. Its function is as follows. Catalyzes the reversible isomerization of glucose-6-phosphate to fructose-6-phosphate. In Mannheimia succiniciproducens (strain KCTC 0769BP / MBEL55E), this protein is Glucose-6-phosphate isomerase.